Consider the following 133-residue polypeptide: ATP synthase epsilon chain, chloroplastic (133 aa).

This sequence belongs to the ATPase epsilon chain family. In terms of assembly, F-type ATPases have 2 components, CF(1) - the catalytic core - and CF(0) - the membrane proton channel. CF(1) has five subunits: alpha(3), beta(3), gamma(1), delta(1), epsilon(1). CF(0) has three main subunits: a, b and c.

It localises to the plastid. It is found in the chloroplast thylakoid membrane. Functionally, produces ATP from ADP in the presence of a proton gradient across the membrane. The polypeptide is ATP synthase epsilon chain, chloroplastic (Vitis vinifera (Grape)).